We begin with the raw amino-acid sequence, 375 residues long: Putative F-box protein At5g52620 (375 aa).

Residues 5-52 (GKSDPIPIDIILDILSRLSTNSIAKFGLASKFCGSILRGQDFIELFLI) form the F-box domain.

This chain is Putative F-box protein At5g52620, found in Arabidopsis thaliana (Mouse-ear cress).